Reading from the N-terminus, the 216-residue chain is Vascular endothelial growth factor A (216 aa).

Residues 1–26 (MNFLLTWIHWGLAALLYFHNAKVLQA) form the signal peptide. 3 disulfides stabilise this stretch: cysteine 52/cysteine 94, cysteine 83/cysteine 128, and cysteine 87/cysteine 130. Residue asparagine 101 is glycosylated (N-linked (GlcNAc...) asparagine). The segment at 140–161 (QEKKSKREKGKGQKRKRKRGRY) is disordered. The segment covering 145-161 (KREKGKGQKRKRKRGRY) has biased composition (basic residues).

Belongs to the PDGF/VEGF growth factor family. Homodimer; disulfide-linked. Also found as heterodimer with PGF. Interacts to the FLT1/VEGFR1 and KDR/VEGFR2 receptors, heparan sulfate and heparin. In terms of tissue distribution, expressed in venom gland, heart, brain, liver, skeletal muscle and kidney.

The protein localises to the secreted. In terms of biological role, growth factor active in angiogenesis, vasculogenesis and endothelial cell growth. Induces endothelial cell proliferation, promotes cell migration, inhibits apoptosis and induces permeabilization of blood vessels. This Protobothrops flavoviridis (Habu) protein is Vascular endothelial growth factor A.